The primary structure comprises 119 residues: Large ribosomal subunit protein uL22 (119 aa).

It belongs to the universal ribosomal protein uL22 family. As to quaternary structure, part of the 50S ribosomal subunit.

Its function is as follows. This protein binds specifically to 23S rRNA; its binding is stimulated by other ribosomal proteins, e.g. L4, L17, and L20. It is important during the early stages of 50S assembly. It makes multiple contacts with different domains of the 23S rRNA in the assembled 50S subunit and ribosome. Functionally, the globular domain of the protein is located near the polypeptide exit tunnel on the outside of the subunit, while an extended beta-hairpin is found that lines the wall of the exit tunnel in the center of the 70S ribosome. This Trichormus variabilis (strain ATCC 29413 / PCC 7937) (Anabaena variabilis) protein is Large ribosomal subunit protein uL22.